Here is a 346-residue protein sequence, read N- to C-terminus: DNA-directed RNA polymerase subunit alpha (346 aa).

Residues 1–243 are alpha N-terminal domain (alpha-NTD); sequence MTMNNPNLTM…EQLSIWVNFE (243 aa). Residues 260 to 346 are alpha C-terminal domain (alpha-CTD); it reads LNENLFRSVE…ERWKAQQAQA (87 aa).

The protein belongs to the RNA polymerase alpha chain family. In terms of assembly, homodimer. The RNAP catalytic core consists of 2 alpha, 1 beta, 1 beta' and 1 omega subunit. When a sigma factor is associated with the core the holoenzyme is formed, which can initiate transcription.

It catalyses the reaction RNA(n) + a ribonucleoside 5'-triphosphate = RNA(n+1) + diphosphate. DNA-dependent RNA polymerase catalyzes the transcription of DNA into RNA using the four ribonucleoside triphosphates as substrates. The polypeptide is DNA-directed RNA polymerase subunit alpha (Sorangium cellulosum (strain So ce56) (Polyangium cellulosum (strain So ce56))).